The chain runs to 179 residues: Acireductone dioxygenase (179 aa).

The interval 1–23 is disordered; sequence MVQAWYMDESTADPRMPHRAQPD. Fe(2+)-binding residues include H88, H90, E94, and H133. Ni(2+) is bound by residues H88, H90, E94, and H133.

Belongs to the acireductone dioxygenase (ARD) family. In terms of assembly, monomer. Interacts with MMP14. Fe(2+) is required as a cofactor. Requires Ni(2+) as cofactor. As to expression, detected in prostate, liver, heart, brain, muscle, kidney and seminal vesicles.

The protein localises to the cytoplasm. The protein resides in the nucleus. It is found in the cell membrane. The catalysed reaction is 1,2-dihydroxy-5-(methylsulfanyl)pent-1-en-3-one + O2 = 4-methylsulfanyl-2-oxobutanoate + formate + 2 H(+). It carries out the reaction 1,2-dihydroxy-5-(methylsulfanyl)pent-1-en-3-one + O2 = 3-(methylsulfanyl)propanoate + CO + formate + 2 H(+). Its pathway is amino-acid biosynthesis; L-methionine biosynthesis via salvage pathway; L-methionine from S-methyl-5-thio-alpha-D-ribose 1-phosphate: step 5/6. Functionally, catalyzes 2 different reactions between oxygen and the acireductone 1,2-dihydroxy-3-keto-5-methylthiopentene (DHK-MTPene) depending upon the metal bound in the active site. Fe-containing acireductone dioxygenase (Fe-ARD) produces formate and 2-keto-4-methylthiobutyrate (KMTB), the alpha-ketoacid precursor of methionine in the methionine recycle pathway. Ni-containing acireductone dioxygenase (Ni-ARD) produces methylthiopropionate, carbon monoxide and formate, and does not lie on the methionine recycle pathway. Also down-regulates cell migration mediated by MMP14. The chain is Acireductone dioxygenase (Adi1) from Rattus norvegicus (Rat).